Consider the following 301-residue polypeptide: 3-methyl-2-oxobutanoate hydroxymethyltransferase (301 aa).

A compositionally biased stretch (low complexity) spans 1–28 (MATSNSSDSSMSAEVPAPYGNGPANAPA). Residues 1–37 (MATSNSSDSSMSAEVPAPYGNGPANAPATPSDTAKKP) form a disordered region. Residues Asp-82 and Asp-121 each contribute to the Mg(2+) site. Residues 82–83 (DS), Asp-121, and Lys-151 contribute to the 3-methyl-2-oxobutanoate site. Glu-153 contacts Mg(2+). Glu-219 (proton acceptor) is an active-site residue.

Belongs to the PanB family. As to quaternary structure, homodecamer; pentamer of dimers. Mg(2+) is required as a cofactor.

Its subcellular location is the cytoplasm. It carries out the reaction 3-methyl-2-oxobutanoate + (6R)-5,10-methylene-5,6,7,8-tetrahydrofolate + H2O = 2-dehydropantoate + (6S)-5,6,7,8-tetrahydrofolate. It participates in cofactor biosynthesis; (R)-pantothenate biosynthesis; (R)-pantoate from 3-methyl-2-oxobutanoate: step 1/2. In terms of biological role, catalyzes the reversible reaction in which hydroxymethyl group from 5,10-methylenetetrahydrofolate is transferred onto alpha-ketoisovalerate to form ketopantoate. The polypeptide is 3-methyl-2-oxobutanoate hydroxymethyltransferase (Arthrobacter sp. (strain FB24)).